A 108-amino-acid chain; its full sequence is UPF0060 membrane protein YnfA (108 aa).

Topologically, residues 1 to 5 (MIKTT) are periplasmic. The helical transmembrane segment at 6–26 (LLFFATALCEIIGCFLPWLWL) threads the bilayer. Residues 27 to 30 (KRNA) lie on the Cytoplasmic side of the membrane. Residues 31–51 (SIWLLLPAGISLALFVWLLTL) form a helical membrane-spanning segment. Residues 52–60 (HPAASGRVY) are Periplasmic-facing. A helical membrane pass occupies residues 61 to 81 (AAYGGVYVCTALMWLRVVDGV). Topologically, residues 82–84 (KLT) are cytoplasmic. The helical transmembrane segment at 85–105 (LYDWTGPLIALCGMLIIVVGW) threads the bilayer. Residues 106–108 (GRT) lie on the Periplasmic side of the membrane.

Belongs to the UPF0060 family.

The protein localises to the cell inner membrane. The polypeptide is UPF0060 membrane protein YnfA (Escherichia coli O157:H7).